The following is a 137-amino-acid chain: Diacylglycerol kinase (137 aa).

Glu42 contacts a divalent metal cation. 2 consecutive transmembrane segments (helical) span residues 49–67 (LIAF…ATFF) and 73–89 (AILF…NTAI). Glu83 functions as the Proton acceptor in the catalytic mechanism. Residue Glu90 participates in a divalent metal cation binding. The helical transmembrane segment at 112 to 132 (SFACLCLIVANGVYAAYVVIF) threads the bilayer.

Belongs to the bacterial diacylglycerol kinase family. It depends on Mg(2+) as a cofactor.

It localises to the cell inner membrane. It carries out the reaction a 1,2-diacyl-sn-glycerol + ATP = a 1,2-diacyl-sn-glycero-3-phosphate + ADP + H(+). In terms of biological role, catalyzes the ATP-dependent phosphorylation of sn-l,2-diacylglycerol (DAG) to phosphatidic acid. Involved in the recycling of diacylglycerol produced as a by-product during membrane-derived oligosaccharide (MDO) biosynthesis. This is Diacylglycerol kinase (dgkA) from Sinorhizobium sp.